Reading from the N-terminus, the 636-residue chain is Sodium-dependent multivitamin transporter (636 aa).

12 helical membrane passes run 24–44 (FSLV…AIGL), 68–88 (CLPV…ILGV), 101–121 (FLGC…IPVF), 143–163 (ICGT…VLYA), 176–196 (LWLS…LGGL), 199–219 (VIWT…AVII), 256–276 (FWTL…VNQA), 297–317 (VFPC…VMFA), 336–356 (FVLY…GLFV), 404–424 (FGYG…GPVL), 428–448 (ISIF…GMFF), and 456–476 (AIVG…GSIV). Residues N489 and N498 are each glycosylated (N-linked (GlcNAc...) asparagine). The helical transmembrane segment at 528–548 (LWYSAHNSTTVIVVGLIVSLL) threads the bilayer. The interval 606-627 (LRASGDKEPMTEASPVHQGTSP) is disordered.

The protein belongs to the sodium:solute symporter (SSF) (TC 2.A.21) family. As to quaternary structure, interacts with PDZD11.

It localises to the cell membrane. It is found in the apical cell membrane. It carries out the reaction biotin(out) + 2 Na(+)(out) = biotin(in) + 2 Na(+)(in). It catalyses the reaction (R)-pantothenate(out) + 2 Na(+)(out) = (R)-pantothenate(in) + 2 Na(+)(in). The enzyme catalyses (R)-lipoate(out) + 2 Na(+)(out) = (R)-lipoate(in) + 2 Na(+)(in). The catalysed reaction is iodide(out) + 2 Na(+)(out) = iodide(in) + 2 Na(+)(in). In terms of biological role, sodium-dependent multivitamin transporter that mediates the electrogenic transport of pantothenate, biotin, lipoate and iodide. Functions as a Na(+)-coupled substrate symporter where the stoichiometry of Na(+):substrate is 2:1, creating an electrochemical Na(+) gradient used as driving force for substrate uptake. Required for biotin and pantothenate uptake in the intestine across the brush border membrane. Plays a role in the maintenance of intestinal mucosa integrity, by providing the gut mucosa with biotin. Contributes to the luminal uptake of biotin and pantothenate into the brain across the blood-brain barrier. In Oryctolagus cuniculus (Rabbit), this protein is Sodium-dependent multivitamin transporter (SLC5A6).